The primary structure comprises 421 residues: Enolase (421 aa).

Gln-161 is a (2R)-2-phosphoglycerate binding site. Glu-203 acts as the Proton donor in catalysis. Residues Asp-240, Glu-283, and Asp-310 each coordinate Mg(2+). Positions 335, 364, 365, and 386 each coordinate (2R)-2-phosphoglycerate. Lys-335 acts as the Proton acceptor in catalysis.

The protein belongs to the enolase family. Requires Mg(2+) as cofactor.

The protein resides in the cytoplasm. It is found in the secreted. The protein localises to the cell surface. It carries out the reaction (2R)-2-phosphoglycerate = phosphoenolpyruvate + H2O. Its pathway is carbohydrate degradation; glycolysis; pyruvate from D-glyceraldehyde 3-phosphate: step 4/5. Functionally, catalyzes the reversible conversion of 2-phosphoglycerate (2-PG) into phosphoenolpyruvate (PEP). It is essential for the degradation of carbohydrates via glycolysis. This is Enolase from Sulfurimonas denitrificans (strain ATCC 33889 / DSM 1251) (Thiomicrospira denitrificans (strain ATCC 33889 / DSM 1251)).